The sequence spans 111 residues: Large ribosomal subunit protein uL22 (111 aa).

This sequence belongs to the universal ribosomal protein uL22 family. Part of the 50S ribosomal subunit.

Its function is as follows. This protein binds specifically to 23S rRNA; its binding is stimulated by other ribosomal proteins, e.g. L4, L17, and L20. It is important during the early stages of 50S assembly. It makes multiple contacts with different domains of the 23S rRNA in the assembled 50S subunit and ribosome. In terms of biological role, the globular domain of the protein is located near the polypeptide exit tunnel on the outside of the subunit, while an extended beta-hairpin is found that lines the wall of the exit tunnel in the center of the 70S ribosome. This chain is Large ribosomal subunit protein uL22, found in Chlamydia trachomatis serovar A (strain ATCC VR-571B / DSM 19440 / HAR-13).